The chain runs to 457 residues: Cytochrome b-c1 complex subunit 1, mitochondrial (457 aa).

Residues 1–26 constitute a mitochondrion transit peptide; it reads MLRTVTSKTVSNQFKRSLATAVATPK.

This sequence belongs to the peptidase M16 family. UQCRC1/QCR1 subfamily. Component of the ubiquinol-cytochrome c oxidoreductase (cytochrome b-c1 complex, complex III, CIII), a multisubunit enzyme composed of 10 subunits. The complex is composed of 3 respiratory subunits cytochrome b (COB), cytochrome c1 (CYT1) and Rieske protein (RIP1), 2 core protein subunits COR1 and QCR2, and 5 low-molecular weight protein subunits QCR6, QCR7, QCR8, QCR9 and QCR10. The complex exists as an obligatory dimer and forms supercomplexes (SCs) in the inner mitochondrial membrane with a monomer or a dimer of cytochrome c oxidase (complex IV, CIV), resulting in 2 different assemblies (supercomplexes III(2)IV and III(2)IV(2)). COR1 interacts with COX5A at the CIII-CIV interface.

It is found in the mitochondrion inner membrane. In terms of biological role, component of the ubiquinol-cytochrome c oxidoreductase, a multisubunit transmembrane complex that is part of the mitochondrial electron transport chain which drives oxidative phosphorylation. The respiratory chain contains 3 multisubunit complexes succinate dehydrogenase (complex II, CII), ubiquinol-cytochrome c oxidoreductase (cytochrome b-c1 complex, complex III, CIII) and cytochrome c oxidase (complex IV, CIV), that cooperate to transfer electrons derived from NADH and succinate to molecular oxygen, creating an electrochemical gradient over the inner membrane that drives transmembrane transport and the ATP synthase. The cytochrome b-c1 complex catalyzes electron transfer from ubiquinol to cytochrome c, linking this redox reaction to translocation of protons across the mitochondrial inner membrane, with protons being carried across the membrane as hydrogens on the quinol. In the process called Q cycle, 2 protons are consumed from the matrix, 4 protons are released into the intermembrane space and 2 electrons are passed to cytochrome c. This chain is Cytochrome b-c1 complex subunit 1, mitochondrial (COR1), found in Saccharomyces cerevisiae (strain ATCC 204508 / S288c) (Baker's yeast).